Reading from the N-terminus, the 41-residue chain is Photosystem II reaction center protein Y (41 aa).

The helical transmembrane segment at 7 to 25 (IAIVLAPVVIAASWAVFNI) threads the bilayer.

The protein belongs to the PsbY family. In terms of assembly, PSII is composed of 1 copy each of membrane proteins PsbA, PsbB, PsbC, PsbD, PsbE, PsbF, PsbH, PsbI, PsbJ, PsbK, PsbL, PsbM, PsbT, PsbX, PsbY, PsbZ, Psb30/Ycf12, peripheral proteins PsbO, CyanoQ (PsbQ), PsbU, PsbV and a large number of cofactors. It forms dimeric complexes.

Its subcellular location is the cellular thylakoid membrane. Functionally, loosely associated component of the core of photosystem II (PSII), it is not always seen in crystals. PSII is a light-driven water plastoquinone oxidoreductase, using light energy to abstract electrons from H(2)O, generating a proton gradient subsequently used for ATP formation. The chain is Photosystem II reaction center protein Y from Nostoc punctiforme (strain ATCC 29133 / PCC 73102).